The primary structure comprises 112 residues: Nitrogen regulatory protein P-II (112 aa).

Residue Tyr51 is modified to O-UMP-tyrosine.

Belongs to the P(II) protein family. Homotrimer.

Its function is as follows. In nitrogen-limiting conditions, when the ratio of Gln to 2-ketoglutarate decreases, P-II is uridylylated to P-II-UMP. P-II-UMP allows the deadenylation of glutamine synthetase (GS), thus activating the enzyme. Conversely, in nitrogen excess P-II is deuridylated and promotes the adenylation of GS. P-II indirectly controls the transcription of the GS gene (glnA). P-II prevents NR-II-catalyzed conversion of NR-I to NR-I-phosphate, the transcriptional activator of glnA. When P-II is uridylylated to P-II-UMP, these events are reversed. This is Nitrogen regulatory protein P-II (glnB) from Aquifex aeolicus (strain VF5).